We begin with the raw amino-acid sequence, 134 residues long: Small ribosomal subunit protein uS8 (134 aa).

It belongs to the universal ribosomal protein uS8 family. In terms of assembly, part of the 30S ribosomal subunit. Contacts proteins S5 and S12.

One of the primary rRNA binding proteins, it binds directly to 16S rRNA central domain where it helps coordinate assembly of the platform of the 30S subunit. The chain is Small ribosomal subunit protein uS8 from Sphingopyxis alaskensis (strain DSM 13593 / LMG 18877 / RB2256) (Sphingomonas alaskensis).